The sequence spans 279 residues: MNTENKEITSNWFTNLRDLLCKEFEKIEEKYAQIKGLKPAKFVRTSWKRNGGGCGIMSLMKGEVFEKVGVNISTVFGEFSQEFRSEILGAELDGKFFATGISVVAHLKSPLIPAMHFNTRYIETSKNWFGGGGDLTPFYPEENETAKFHTAFKEACDKYDSSYYPKFKKQCDEYFYLRHRKEPRGVGGIFYDYLNSGNFEQDFAFTKDIGKALLSVYPEIVRSKLFLPWTAEQKEYQLIRRGRYVEFNLLYDRGTKFGLMTDGNVEAILMSLPPVVKFN.

Residue serine 102 participates in substrate binding. A divalent metal cation-binding residues include histidine 106 and histidine 116. The active-site Proton donor is the histidine 116. Residue 118-120 coordinates substrate; that stretch reads NTR. Histidine 149 and histidine 179 together coordinate a divalent metal cation. Residues 244-279 are important for dimerization; sequence YVEFNLLYDRGTKFGLMTDGNVEAILMSLPPVVKFN.

It belongs to the aerobic coproporphyrinogen-III oxidase family. In terms of assembly, homodimer. It depends on a divalent metal cation as a cofactor.

The protein localises to the cytoplasm. The enzyme catalyses coproporphyrinogen III + O2 + 2 H(+) = protoporphyrinogen IX + 2 CO2 + 2 H2O. It functions in the pathway porphyrin-containing compound metabolism; protoporphyrin-IX biosynthesis; protoporphyrinogen-IX from coproporphyrinogen-III (O2 route): step 1/1. Its function is as follows. Involved in the heme biosynthesis. Catalyzes the aerobic oxidative decarboxylation of propionate groups of rings A and B of coproporphyrinogen-III to yield the vinyl groups in protoporphyrinogen-IX. This Rickettsia prowazekii (strain Madrid E) protein is Oxygen-dependent coproporphyrinogen-III oxidase.